The sequence spans 648 residues: Replication restart protein PriA (648 aa).

One can recognise a Helicase ATP-binding domain in the interval 131 to 297; sequence TIFNESNKPT…KTHKYQLVTL (167 aa). 144–151 lines the ATP pocket; that stretch reads GVTGSGKT. The short motif at 240–243 is the DEAH box element; sequence DEEH. 8 residues coordinate Zn(2+): Cys358, Cys361, Cys367, Cys370, Cys385, Cys388, Cys398, and Cys401. The Helicase C-terminal domain occupies 393–548; sequence KIFSSCPECL…SFFTNELEIR (156 aa).

This sequence belongs to the helicase family. PriA subfamily. In terms of assembly, component of the replication restart primosome. It depends on Zn(2+) as a cofactor.

It carries out the reaction Couples ATP hydrolysis with the unwinding of duplex DNA by translocating in the 3'-5' direction.. It catalyses the reaction ATP + H2O = ADP + phosphate + H(+). Its function is as follows. Initiates the restart of stalled replication forks, which reloads the replicative helicase on sites other than the origin of replication. Recognizes and binds to abandoned replication forks and remodels them to uncover a helicase loading site. Promotes assembly of the primosome at these replication forks. The sequence is that of Replication restart protein PriA from Rickettsia typhi (strain ATCC VR-144 / Wilmington).